A 772-amino-acid polypeptide reads, in one-letter code: Rho guanine nucleotide exchange factor 6 (772 aa).

A Calponin-homology (CH) domain is found at 1–111 (MNPEERVVTW…TLLAVNKATE (111 aa)). A disordered region spans residues 115-158 (SERPCGRSSSLSATTSSQTNPQAAVPSTTPEQQSEEKAAEMTEN). The segment covering 122 to 133 (SSSLSATTSSQT) has biased composition (low complexity). The residue at position 126 (Ser126) is a Phosphoserine. Thr133 is subject to Phosphothreonine. Polar residues predominate over residues 134-146 (NPQAAVPSTTPEQ). The SH3 domain occupies 160–219 (SHQLIVKARFNFKQTNEDELSVCKGDIIYVTRVEEGGWWEGTLNGRTGWFPSNYVREIKP). A Phosphoserine modification is found at Ser225. The DH domain occupies 241–421 (YYTVVLQNIL…KSLMGQCQDL (181 aa)). The region spanning 443-548 (DIKTLGNVIF…WMEQLNRLTK (106 aa)) is the PH domain. A Phosphoserine modification is found at Ser488. Residues 557–573 (SKTSSSSCSTHSSFSST) are compositionally biased toward low complexity. Residues 557–581 (SKTSSSSCSTHSSFSSTGQPRGPLE) form a disordered region. Residues Ser640 and Ser680 each carry the phosphoserine modification.

In terms of assembly, interacts with PAK kinases through the SH3 domain. Interacts with GIT1. Interacts with PARVB. Component of cytoplasmic complexes, which also contain PXN, GIT1 and PAK1. Interacts with BIN2. Identified in a complex with BIN2 and GIT2. Interacts with PARVG; the guanine nucleotide exchange factor activity of ARHGEF6 is essential for PARVG-induced enhancement of cell spreading.

Its subcellular location is the cell projection. It is found in the lamellipodium. In terms of biological role, acts as a RAC1 guanine nucleotide exchange factor (GEF). This is Rho guanine nucleotide exchange factor 6 (Arhgef6) from Rattus norvegicus (Rat).